The sequence spans 425 residues: Multifunctional CCA protein (425 aa).

Residues glycine 8 and arginine 11 each coordinate ATP. 2 residues coordinate CTP: glycine 8 and arginine 11. Aspartate 21 and aspartate 23 together coordinate Mg(2+). ATP-binding residues include arginine 91, arginine 141, and arginine 144. CTP is bound by residues arginine 91, arginine 141, and arginine 144. The HD domain occupies 230 to 331 (TGVHLMMVLD…VRLLERCDAI (102 aa)).

The protein belongs to the tRNA nucleotidyltransferase/poly(A) polymerase family. Bacterial CCA-adding enzyme type 1 subfamily. Monomer. Can also form homodimers and oligomers. It depends on Mg(2+) as a cofactor. The cofactor is Ni(2+).

The enzyme catalyses a tRNA precursor + 2 CTP + ATP = a tRNA with a 3' CCA end + 3 diphosphate. It catalyses the reaction a tRNA with a 3' CCA end + 2 CTP + ATP = a tRNA with a 3' CCACCA end + 3 diphosphate. Its function is as follows. Catalyzes the addition and repair of the essential 3'-terminal CCA sequence in tRNAs without using a nucleic acid template. Adds these three nucleotides in the order of C, C, and A to the tRNA nucleotide-73, using CTP and ATP as substrates and producing inorganic pyrophosphate. tRNA 3'-terminal CCA addition is required both for tRNA processing and repair. Also involved in tRNA surveillance by mediating tandem CCA addition to generate a CCACCA at the 3' terminus of unstable tRNAs. While stable tRNAs receive only 3'-terminal CCA, unstable tRNAs are marked with CCACCA and rapidly degraded. This is Multifunctional CCA protein from Acidovorax ebreus (strain TPSY) (Diaphorobacter sp. (strain TPSY)).